The sequence spans 458 residues: Exodeoxyribonuclease 7 large subunit (458 aa).

The protein belongs to the XseA family. In terms of assembly, heterooligomer composed of large and small subunits.

The protein localises to the cytoplasm. It catalyses the reaction Exonucleolytic cleavage in either 5'- to 3'- or 3'- to 5'-direction to yield nucleoside 5'-phosphates.. In terms of biological role, bidirectionally degrades single-stranded DNA into large acid-insoluble oligonucleotides, which are then degraded further into small acid-soluble oligonucleotides. The sequence is that of Exodeoxyribonuclease 7 large subunit from Geobacter sp. (strain M21).